Reading from the N-terminus, the 196-residue chain is Probable malonic semialdehyde reductase RutE (196 aa).

The protein belongs to the nitroreductase family. HadB/RutE subfamily. FMN is required as a cofactor.

It carries out the reaction 3-hydroxypropanoate + NADP(+) = 3-oxopropanoate + NADPH + H(+). Functionally, may reduce toxic product malonic semialdehyde to 3-hydroxypropionic acid, which is excreted. The polypeptide is Probable malonic semialdehyde reductase RutE (Enterobacter sp. (strain 638)).